Reading from the N-terminus, the 526-residue chain is Glutamate--cysteine ligase (526 aa).

It belongs to the glutamate--cysteine ligase type 1 family. Type 1 subfamily.

It catalyses the reaction L-cysteine + L-glutamate + ATP = gamma-L-glutamyl-L-cysteine + ADP + phosphate + H(+). It participates in sulfur metabolism; glutathione biosynthesis; glutathione from L-cysteine and L-glutamate: step 1/2. This is Glutamate--cysteine ligase from Proteus mirabilis (strain HI4320).